The sequence spans 546 residues: Chaperonin GroEL (546 aa).

ATP is bound by residues 30–33 (TLGP), K51, 87–91 (DGTTT), G415, 479–481 (NAA), and D495. A disordered region spans residues 526 to 546 (KEDAPMPGGMPGGMGGMGMDM). Positions 534 to 546 (GMPGGMGGMGMDM) are enriched in gly residues.

This sequence belongs to the chaperonin (HSP60) family. As to quaternary structure, forms a cylinder of 14 subunits composed of two heptameric rings stacked back-to-back. Interacts with the co-chaperonin GroES.

The protein localises to the cytoplasm. It catalyses the reaction ATP + H2O + a folded polypeptide = ADP + phosphate + an unfolded polypeptide.. Together with its co-chaperonin GroES, plays an essential role in assisting protein folding. The GroEL-GroES system forms a nano-cage that allows encapsulation of the non-native substrate proteins and provides a physical environment optimized to promote and accelerate protein folding. In Burkholderia thailandensis, this protein is Chaperonin GroEL.